The sequence spans 471 residues: Glutamate--tRNA ligase (471 aa).

Positions Pro-9–Gly-19 match the 'HIGH' region motif. 4 residues coordinate Zn(2+): Cys-98, Cys-100, Cys-125, and His-127. The short motif at Lys-237–Arg-241 is the 'KMSKS' region element. Position 240 (Lys-240) interacts with ATP.

It belongs to the class-I aminoacyl-tRNA synthetase family. Glutamate--tRNA ligase type 1 subfamily. As to quaternary structure, monomer. Zn(2+) serves as cofactor.

The protein localises to the cytoplasm. It catalyses the reaction tRNA(Glu) + L-glutamate + ATP = L-glutamyl-tRNA(Glu) + AMP + diphosphate. Its function is as follows. Catalyzes the attachment of glutamate to tRNA(Glu) in a two-step reaction: glutamate is first activated by ATP to form Glu-AMP and then transferred to the acceptor end of tRNA(Glu). This Enterobacter sp. (strain 638) protein is Glutamate--tRNA ligase.